We begin with the raw amino-acid sequence, 114 residues long: Fumarate reductase subunit D (114 aa).

3 helical membrane passes run 24–44 (VSAI…PFGL), 50–70 (LITF…TIFP), and 92–112 (GGFI…FAVI).

It belongs to the FrdD family. As to quaternary structure, part of an enzyme complex containing four subunits: a flavoprotein (FrdA), an iron-sulfur protein (FrdB), and two hydrophobic anchor proteins (FrdC and FrdD).

It is found in the cell inner membrane. In terms of biological role, anchors the catalytic components of the fumarate reductase complex to the cell membrane, binds quinones. In Haemophilus influenzae (strain PittEE), this protein is Fumarate reductase subunit D.